The primary structure comprises 208 residues: dITP/XTP pyrophosphatase (208 aa).

Residue 11–16 (SRNWKK) coordinates substrate. Aspartate 76 serves as the catalytic Proton acceptor. Aspartate 76 contributes to the Mg(2+) binding site. Residues serine 77, 158–161 (FGYD), lysine 184, and 189–190 (HR) contribute to the substrate site.

Belongs to the HAM1 NTPase family. Homodimer. The cofactor is Mg(2+).

The enzyme catalyses XTP + H2O = XMP + diphosphate + H(+). It catalyses the reaction dITP + H2O = dIMP + diphosphate + H(+). It carries out the reaction ITP + H2O = IMP + diphosphate + H(+). Pyrophosphatase that catalyzes the hydrolysis of nucleoside triphosphates to their monophosphate derivatives, with a high preference for the non-canonical purine nucleotides XTP (xanthosine triphosphate), dITP (deoxyinosine triphosphate) and ITP. Seems to function as a house-cleaning enzyme that removes non-canonical purine nucleotides from the nucleotide pool, thus preventing their incorporation into DNA/RNA and avoiding chromosomal lesions. The polypeptide is dITP/XTP pyrophosphatase (Mycobacterium leprae (strain TN)).